The sequence spans 287 residues: Nucleotide-binding protein Ppro_0977 (287 aa).

Position 8-15 (8-15 (GMSGSGKS)) interacts with ATP. Residue 59-62 (DIRG) participates in GTP binding.

The protein belongs to the RapZ-like family.

In terms of biological role, displays ATPase and GTPase activities. In Pelobacter propionicus (strain DSM 2379 / NBRC 103807 / OttBd1), this protein is Nucleotide-binding protein Ppro_0977.